Consider the following 302-residue polypeptide: Nitrophorin Cim l NP (302 aa).

An N-terminal signal peptide occupies residues 1 to 20 (MKLLLSAGAALAFVLGLCAA). Cysteine 80 is a heme binding site.

Requires heme b as cofactor. In terms of processing, the N-terminus is blocked. As to expression, expressed in salivary glands.

It is found in the secreted. Functionally, heme-based protein that delivers nitric oxide gas (NO) to the victim while feeding, resulting in vasodilation. In place of heme, the heme-binding cysteine can also reversibly bind NO when it is present in high concentrations. This chain is Nitrophorin Cim l NP, found in Cimex lectularius (Bed bug).